The primary structure comprises 159 residues: Heterocyst differentiation protein HetP (159 aa).

Residues 1–50 (MNQNTTGITNYNKAINPQQFDKVVEAILAGKYSWACVLMLRFAGYNPMHY) are required to complement a hetP deletion.

Belongs to the HetP family. As to quaternary structure, in bacterial two-hybrid assays interacts weakly with Asl1930, Alr2902 and Alr3234.

Functionally, promotes heterocyst differentiation and commitment when nitrogen is limiting. Interplay between the 4 HetP paralogs controls the timing of commitment to heterocyst formation and its duration. Epistatic analysis show that the 3 paralogs act upstream of hetP to delay commitment (asl1930, alr3234) or inhibit development (alr2902). Asl1930 and Alr3234 must also attenuate the activity of Alr2902. Required for heterocyst formation. Functions directly downstream of master regulator HetR to promote heterocyst differentiation, functioning downstream of patterning (cell choice). Partially functionally redundant with homologs alr2902 and asl1930 but not alr3234. Overexpression leads to more than wild-type levels of heterocysts. Overexpression in the absence of hetR partially bypasses hetR deletion, allowing differentiation of heterocysts, although they only fix nitrogen in the absence of oxygen (a Fox- Fix+ phenotype), suggesting they are not fully. This is Heterocyst differentiation protein HetP from Nostoc sp. (strain PCC 7120 / SAG 25.82 / UTEX 2576).